We begin with the raw amino-acid sequence, 99 residues long: ATP synthase subunit c (99 aa).

Transmembrane regions (helical) follow at residues 23 to 43 and 78 to 98; these read GAGI…IGAL and MGIA…LIFV.

The protein belongs to the ATPase C chain family. As to quaternary structure, F-type ATPases have 2 components, F(1) - the catalytic core - and F(0) - the membrane proton channel. F(1) has five subunits: alpha(3), beta(3), gamma(1), delta(1), epsilon(1). F(0) has three main subunits: a(1), b(2) and c(10-14). The alpha and beta chains form an alternating ring which encloses part of the gamma chain. F(1) is attached to F(0) by a central stalk formed by the gamma and epsilon chains, while a peripheral stalk is formed by the delta and b chains.

The protein resides in the cell membrane. Its function is as follows. F(1)F(0) ATP synthase produces ATP from ADP in the presence of a proton or sodium gradient. F-type ATPases consist of two structural domains, F(1) containing the extramembraneous catalytic core and F(0) containing the membrane proton channel, linked together by a central stalk and a peripheral stalk. During catalysis, ATP synthesis in the catalytic domain of F(1) is coupled via a rotary mechanism of the central stalk subunits to proton translocation. In terms of biological role, key component of the F(0) channel; it plays a direct role in translocation across the membrane. A homomeric c-ring of between 10-14 subunits forms the central stalk rotor element with the F(1) delta and epsilon subunits. This chain is ATP synthase subunit c, found in Mycoplasma mobile (strain ATCC 43663 / 163K / NCTC 11711) (Mesomycoplasma mobile).